The sequence spans 197 residues: Phosphoheptose isomerase (197 aa).

The SIS domain occupies 36–197; that stretch reads MVNALLNEGK…IDSQLFGSEE (162 aa). 51-53 is a substrate binding site; sequence NGG. Zn(2+) is bound by residues H60 and E64. Residues E64, 93–94, 119–121, S124, and Q174 each bind substrate; these read ND and STS. Zn(2+) is bound by residues Q174 and H182.

This sequence belongs to the SIS family. GmhA subfamily. As to quaternary structure, homotetramer. Zn(2+) serves as cofactor.

Its subcellular location is the cytoplasm. The enzyme catalyses 2 D-sedoheptulose 7-phosphate = D-glycero-alpha-D-manno-heptose 7-phosphate + D-glycero-beta-D-manno-heptose 7-phosphate. It participates in carbohydrate biosynthesis; D-glycero-D-manno-heptose 7-phosphate biosynthesis; D-glycero-alpha-D-manno-heptose 7-phosphate and D-glycero-beta-D-manno-heptose 7-phosphate from sedoheptulose 7-phosphate: step 1/1. Catalyzes the isomerization of sedoheptulose 7-phosphate in D-glycero-D-manno-heptose 7-phosphate. This chain is Phosphoheptose isomerase, found in Pseudomonas putida (strain W619).